A 191-amino-acid chain; its full sequence is GTP cyclohydrolase 1 (191 aa).

Zn(2+) contacts are provided by C80, H83, and C151.

Belongs to the GTP cyclohydrolase I family. Toroid-shaped homodecamer, composed of two pentamers of five dimers.

The catalysed reaction is GTP + H2O = 7,8-dihydroneopterin 3'-triphosphate + formate + H(+). It functions in the pathway cofactor biosynthesis; 7,8-dihydroneopterin triphosphate biosynthesis; 7,8-dihydroneopterin triphosphate from GTP: step 1/1. The protein is GTP cyclohydrolase 1 of Nitrosospira multiformis (strain ATCC 25196 / NCIMB 11849 / C 71).